A 364-amino-acid polypeptide reads, in one-letter code: 3-isopropylmalate dehydrogenase (364 aa).

76-89 is a binding site for NAD(+); the sequence is GPKWEKLPPNEQPE. 4 residues coordinate substrate: R97, R107, R136, and D225. D225, D249, and D253 together coordinate Mg(2+). NAD(+) is bound at residue 283 to 295; sequence GSAPDIAGKGIAN.

The protein belongs to the isocitrate and isopropylmalate dehydrogenases family. LeuB type 1 subfamily. As to quaternary structure, homodimer. Requires Mg(2+) as cofactor. Mn(2+) serves as cofactor.

It is found in the cytoplasm. The catalysed reaction is (2R,3S)-3-isopropylmalate + NAD(+) = 4-methyl-2-oxopentanoate + CO2 + NADH. Its pathway is amino-acid biosynthesis; L-leucine biosynthesis; L-leucine from 3-methyl-2-oxobutanoate: step 3/4. Its function is as follows. Catalyzes the oxidation of 3-carboxy-2-hydroxy-4-methylpentanoate (3-isopropylmalate) to 3-carboxy-4-methyl-2-oxopentanoate. The product decarboxylates to 4-methyl-2 oxopentanoate. This chain is 3-isopropylmalate dehydrogenase, found in Shewanella oneidensis (strain ATCC 700550 / JCM 31522 / CIP 106686 / LMG 19005 / NCIMB 14063 / MR-1).